The sequence spans 480 residues: Cytochrome c oxidase subunit 1 (480 aa).

The chain crosses the membrane as a helical span at residues Ile22 to Ile42. Residues Glu45 and Gly50 each coordinate Ca(2+). 8 helical membrane-spanning segments follow: residues Leu64 to Gly84, Ser109 to Gly129, Leu151 to Ile171, Ile194 to Met214, Leu240 to Ile260, Met278 to Tyr298, Tyr309 to Val329, and Leu343 to Val363. His69 serves as a coordination point for Fe(II)-heme a. Position 246 (His246) interacts with Cu cation. Positions His246–Tyr250 form a cross-link, 1'-histidyl-3'-tyrosine (His-Tyr). Residue Tyr250 participates in O2 binding. His295 and His296 together coordinate Cu cation. Positions 374 and 375 each coordinate Mg(2+). His382 contributes to the heme a3 binding site. A run of 2 helical transmembrane segments spans residues His382–Ile402 and Leu416–Phe436. Position 384 (His384) interacts with Fe(II)-heme a. Residue Pro447 participates in Ca(2+) binding. A helical transmembrane segment spans residues Phe458 to Ile478.

The protein belongs to the heme-copper respiratory oxidase family. In terms of assembly, component of the cytochrome c oxidase (complex IV, CIV), a multisubunit enzyme composed of a catalytic core of 3 subunits and several supernumerary subunits. The complex exists as a monomer or a dimer and forms supercomplexes (SCs) in the inner mitochondrial membrane with ubiquinol-cytochrome c oxidoreductase (cytochrome b-c1 complex, complex III, CIII). The cofactor is heme. Cu cation serves as cofactor.

It localises to the mitochondrion inner membrane. It catalyses the reaction 4 Fe(II)-[cytochrome c] + O2 + 8 H(+)(in) = 4 Fe(III)-[cytochrome c] + 2 H2O + 4 H(+)(out). The protein operates within energy metabolism; oxidative phosphorylation. Component of the cytochrome c oxidase, the last enzyme in the mitochondrial electron transport chain which drives oxidative phosphorylation. The respiratory chain contains 3 multisubunit complexes succinate dehydrogenase (complex II, CII), ubiquinol-cytochrome c oxidoreductase (cytochrome b-c1 complex, complex III, CIII) and cytochrome c oxidase (complex IV, CIV), that cooperate to transfer electrons derived from NADH and succinate to molecular oxygen, creating an electrochemical gradient over the inner membrane that drives transmembrane transport and the ATP synthase. Cytochrome c oxidase is the component of the respiratory chain that catalyzes the reduction of oxygen to water. Electrons originating from reduced cytochrome c in the intermembrane space (IMS) are transferred via the dinuclear copper A center (CU(A)) of subunit 2 and heme A of subunit 1 to the active site in subunit 1, a binuclear center (BNC) formed by heme A3 and copper B (CU(B)). The BNC reduces molecular oxygen to 2 water molecules using 4 electrons from cytochrome c in the IMS and 4 protons from the mitochondrial matrix. The sequence is that of Cytochrome c oxidase subunit 1 (MT-CO1) from Theileria annulata.